A 150-amino-acid polypeptide reads, in one-letter code: UPF0756 membrane protein CGSHiEE_06715 (150 aa).

4 helical membrane-spanning segments follow: residues 1–21, 52–72, 81–101, and 123–143; these read MTLQLNTIALLLVILLILGVL, YGVKIGIIILTIGVLSPLVSG, GFVSWKMALSISVGVLVAWLA, and IIGVAFLGGIPVGPLIAAGIL.

Belongs to the UPF0756 family.

It localises to the cell membrane. This Haemophilus influenzae (strain PittEE) protein is UPF0756 membrane protein CGSHiEE_06715.